The primary structure comprises 445 residues: FAS-associated factor 2-A (445 aa).

Residues 12–53 (EQTEKLLQFQDLTGIESMDQCRQTLQQHNWNIEAAVQDRLNE) enclose the UBA domain. A coiled-coil region spans residues 275 to 353 (SERLEREERN…ERKSECLPAE (79 aa)). The disordered stretch occupies residues 302–354 (RADQEKERKKKEKQEQKRREEEEAQRKQMLEERKKRNLEEEKERKSECLPAEP). The span at 303-348 (ADQEKERKKKEKQEQKRREEEEAQRKQMLEERKKRNLEEEKERKSE) shows a compositional bias: basic and acidic residues. Residues 357–439 (DHPDNVKIIF…GLSQSQLLFV (83 aa)) form the UBX domain.

The protein resides in the cytoplasm. It localises to the lipid droplet. Its subcellular location is the endoplasmic reticulum. Its function is as follows. Plays an important role in endoplasmic reticulum-associated degradation (ERAD) that mediates ubiquitin-dependent degradation of misfolded endoplasmic reticulum proteins. Involved in inhibition of lipid droplet degradation. Involved in stress granule disassembly. The polypeptide is FAS-associated factor 2-A (faf2-a) (Xenopus laevis (African clawed frog)).